The chain runs to 406 residues: 2,3-bisphosphoglycerate-independent phosphoglycerate mutase (406 aa).

This sequence belongs to the BPG-independent phosphoglycerate mutase family. A-PGAM subfamily.

It catalyses the reaction (2R)-2-phosphoglycerate = (2R)-3-phosphoglycerate. Its pathway is carbohydrate degradation; glycolysis; pyruvate from D-glyceraldehyde 3-phosphate: step 3/5. Its function is as follows. Catalyzes the interconversion of 2-phosphoglycerate and 3-phosphoglycerate. This is 2,3-bisphosphoglycerate-independent phosphoglycerate mutase from Methanococcus maripaludis (strain C6 / ATCC BAA-1332).